The sequence spans 235 residues: Protein shisa-5 (235 aa).

The signal sequence occupies residues 1 to 26 (MAAPAPSLWTLLLLLLLLPPPPGAHG). Over 27–105 (ELCRPFGEDN…SSFDSDPMSG (79 aa)) the chain is Extracellular. Residues 106–126 (FGATVAIGVTIFVVFIATIII) traverse the membrane as a helical segment. Residues 127-235 (CFTCSCCCLY…TYMDSLKTIP (109 aa)) are Cytoplasmic-facing. The interval 157 to 235 (APYPQPQPQP…TYMDSLKTIP (79 aa)) is disordered. Composition is skewed to pro residues over residues 159–172 (YPQP…PSYP) and 181–211 (PMPP…PPPY).

It belongs to the shisa family. As to quaternary structure, interacts with PDCD6; PDCD6 can stabilize SHISA5. In terms of tissue distribution, spleen and thymus.

The protein resides in the endoplasmic reticulum membrane. The protein localises to the nucleus membrane. Can induce apoptosis in a caspase-dependent manner and plays a role in p53/TP53-dependent apoptosis. The polypeptide is Protein shisa-5 (Shisa5) (Mus musculus (Mouse)).